A 63-amino-acid chain; its full sequence is Sperm protamine P1 (63 aa).

Residues 1-47 form a disordered region; that stretch reads MARCRRHIRSRSRSRNQCQRRRRRSHYNRRRTYRRSRRHSRRRRVRR.

Belongs to the protamine P1 family. Testis.

The protein resides in the nucleus. It localises to the chromosome. Protamines substitute for histones in the chromatin of sperm during the haploid phase of spermatogenesis. They compact sperm DNA into a highly condensed, stable and inactive complex. The polypeptide is Sperm protamine P1 (PRM1) (Planigale tenuirostris (Narrow-nosed planigale)).